The primary structure comprises 143 residues: Sporulation-specific protein 73 (143 aa).

Belongs to the SPO73 family. In terms of assembly, interacts with SPO71.

Its subcellular location is the cytoplasm. It is found in the prospore membrane. Functionally, required for spore wall assembly and ascus formation. Involved in the formation and elongation of prospore membranes. This chain is Sporulation-specific protein 73, found in Saccharomyces cerevisiae (strain ATCC 204508 / S288c) (Baker's yeast).